A 358-amino-acid polypeptide reads, in one-letter code: Na(+)/H(+) exchange regulatory cofactor NHE-RF1 (358 aa).

N-acetylserine is present on Ser2. Residues Ser2 and Ser46 each carry the phosphoserine modification. The PDZ 1 domain maps to Leu14 to Asp94. Over residues Gln114–Glu134 the composition is skewed to low complexity. Positions Gln114–Arg151 are disordered. The segment covering Asn135–Arg151 has biased composition (basic and acidic residues). The 81-residue stretch at Leu154–Glu234 folds into the PDZ 2 domain. The disordered stretch occupies residues Ser247 to Leu358. The segment covering Leu272 to Ser290 has biased composition (low complexity). Ser279, Ser289, and Ser290 each carry phosphoserine. Thr292 carries the post-translational modification Phosphothreonine. A phosphoserine mark is found at Ser293, Ser298, and Ser301. The span at Thr308–Leu327 shows a compositional bias: low complexity. The segment covering Trp348 to Leu358 has biased composition (basic and acidic residues).

As to quaternary structure, homodimer, and heterodimer with NHERF2. Binds the N-termini of EZR, RDX and MSN. Binds the C-termini of PDGFRA, PDGFRB, ADRB2, NOS2 and CFTR. Binds ARHGAP17, EPI64, RACK1, OPRK1, GNAQ, CTNNB1 and PLCB3. Binds PDZK1. Interacts with CLCN3. Binds the C-terminus of PAG1. In resting T-cells, part of a PAG1-NHERF1-MSN complex which is disrupted upon TCR activation. Forms a complex with CFTR and SLC4A7. Forms a complex with SLC4A7 and ATP6V1B1. Interacts with TRPC4 (via the PDZ-binding domain). Directly interacts with HTR4. Interacts (via the PDZ 1 domain) with PODXL (via the C-terminal PDZ-binding motif DTHL); interaction is not detected in glomerular epithelium cells. Interacts (via the PDZ 1 domain) with PODXL (via the C-terminal PDZ-binding motif DTHL); the interaction take place early in the secretory pathway and is necessary for its apical membrane sorting. Interacts with SLC26A3. Interacts with MCC. Interacts with SLC34A1. Interacts (via the PDZ domains) with SLC26A6 isoform 4 and isoform 5. Interacts (via PDZ domains) with ACE2 (via PDZ-binding motif); the interaction may enhance ACE2 membrane residence. In terms of processing, phosphorylated on serine residues. Detected in ileum, duodenum and in kidney, where it is found in the glomerulus, the proximal tubule, the thick ascending limb of Henle's loop and the cortical collecting duct.

The protein localises to the cytoplasm. It localises to the apical cell membrane. Its subcellular location is the cell projection. The protein resides in the filopodium. It is found in the ruffle. The protein localises to the microvillus. It localises to the endomembrane system. Scaffold protein that connects plasma membrane proteins with members of the ezrin/moesin/radixin family and thereby helps to link them to the actin cytoskeleton and to regulate their surface expression. Necessary for recycling of internalized ADRB2. Was first known to play a role in the regulation of the activity and subcellular location of SLC9A3. Necessary for cAMP-mediated phosphorylation and inhibition of SLC9A3. Involved in sperm capacitation. May participate in the regulation of the chloride and bicarbonate homeostasis in spermatozoa. May enhance Wnt signaling. May participate in HTR4 targeting to microvilli. Involved in the regulation of phosphate reabsorption in the renal proximal tubules. This is Na(+)/H(+) exchange regulatory cofactor NHE-RF1 (NHERF1) from Oryctolagus cuniculus (Rabbit).